The following is a 609-amino-acid chain: WD repeat-containing protein 1 (609 aa).

WD repeat units follow at residues 6–47, 50–89, 95–137, 140–178, 182–220, 226–265, 272–308, 313–353, 360–410, 434–476, 482–520, 525–563, and 568–606; these read EIKK…IRNI, PAIADIYTEHAHQVVVAKYAPSGFYIASGDVSGKLRIWDT, LLKY…LWDS, SVGEITGHNKVINSVDIKQTRPYRLATGSDDNCAAFFEG, KFKFTLSDHTRFVNCVRFSPDGNRFATASADGQIFIYDG, VCALGGGKAHDGGIYAISWSPDSSQLLSASGDKTAKIWDV, STFNMGSNVLDQQLGCLWQKDHLLSLSLSGYINYLDK, KPLR…YWDS, GFSG…KMDV, MKDK…LYSI, KSDDKTLEAKGPVTDLAYSHDGAFLAVCDANKVVTVFSV, VEHNVFYGHHAKVVCIAWSPDNEHFASGGMDMMVYVWTV, and TRIKIPDAHRLHHVSGLAWLDEHTLVTTSHDASVKEWSI.

It belongs to the WD repeat AIP1 family.

It localises to the cytoplasm. The protein localises to the cytoskeleton. Its function is as follows. Induces disassembly of actin filaments in conjunction with ADF/cofilin family proteins. Enhances cofilin-mediated actin severing. The polypeptide is WD repeat-containing protein 1 (WDR1) (Gallus gallus (Chicken)).